Here is a 484-residue protein sequence, read N- to C-terminus: uncharacterized protein (484 aa).

Residues 334–484 (IIIRQITDND…ENEWIYEVNL (151 aa)) form the N-acetyltransferase domain.

This is an uncharacterized protein from Methanocaldococcus jannaschii (strain ATCC 43067 / DSM 2661 / JAL-1 / JCM 10045 / NBRC 100440) (Methanococcus jannaschii).